Consider the following 319-residue polypeptide: Coproporphyrin III ferrochelatase 2 (319 aa).

Fe-coproporphyrin III is bound by residues Tyr-13, Arg-30, 46–47 (RY), Ser-54, and Tyr-125. Fe(2+)-binding residues include His-181 and Glu-262.

It belongs to the ferrochelatase family.

It localises to the cytoplasm. It catalyses the reaction Fe-coproporphyrin III + 2 H(+) = coproporphyrin III + Fe(2+). Its pathway is porphyrin-containing compound metabolism; protoheme biosynthesis. Its function is as follows. Involved in coproporphyrin-dependent heme b biosynthesis. Catalyzes the insertion of ferrous iron into coproporphyrin III to form Fe-coproporphyrin III. The chain is Coproporphyrin III ferrochelatase 2 from Bacillus anthracis.